We begin with the raw amino-acid sequence, 228 residues long: Glucose-induced degradation protein 8-A homolog (228 aa).

Residues 25–57 (QRADMNRLIMNYLVTEGFKEAAEKFRMESGIEP) enclose the LisH domain. In terms of domain architecture, CTLH spans 63 to 120 (SLDERIKIREMVLKGQIQEAIALINSLHPELLDTNRYLYFHLQQQHLIELIRLRETEA).

Belongs to the GID8 family. Identified in the CTLH complex that contains at least MAEA, RMND5A (or alternatively its paralog RMND5B), GID8, WDR26, and RANBP9 and/or RANBP10. Interacts with CTNNB1.

Its function is as follows. Core component of the CTLH E3 ubiquitin-protein ligase complex that selectively accepts ubiquitin from UBE2H and mediates ubiquitination and subsequent proteasomal degradation of target proteins. Acts as a positive regulator of Wnt signaling pathway by promoting beta-catenin (CTNNB1) nuclear accumulation. Required for normal Wnt signaling and normal dorsoventral patterning during embryogenesis. This chain is Glucose-induced degradation protein 8-A homolog (gid8a), found in Danio rerio (Zebrafish).